A 751-amino-acid polypeptide reads, in one-letter code: Centrosomal protein of 68 kDa (751 aa).

Basic and acidic residues-rich tracts occupy residues 1–17 (MALG…EDTK) and 86–96 (ASREPVAERSE). The interval 1-253 (MALGEEKAEA…PQPVFSGGDA (253 aa)) is disordered. Polar residues-rich tracts occupy residues 131 to 144 (LPQT…TTIC) and 163 to 175 (APSS…SQWK). Residues 176–200 (SMPSPGSAAPQPSSCSVSASSTGSS) show a composition bias toward low complexity. Residue S326 is modified to Phosphoserine. The segment covering 339–348 (STLKSPTNVF) has biased composition (polar residues). 3 disordered regions span residues 339–474 (STLK…ESDD), 511–545 (SPLE…SGDP), and 590–611 (RLDR…KGGE). Composition is skewed to basic and acidic residues over residues 399-416 (GSRD…RGAK) and 433-450 (RTRD…EKRT). Positions 451 to 461 (SQSARRPTCTE) are enriched in polar residues. 2 positions are modified to phosphoserine: S466 and S472. A compositionally biased stretch (low complexity) spans 520–537 (GPASLPSSSSQSQLPPGA).

Interacts with CNTLN; the interaction recruits CEP68 to the centrosome. Interacts with the SCF(FBXW11) complex which contains SKP1, CUL1 and FBXW11; the interaction is probably mediated by FBXW11 and the complex also contains CDK5RAP2 and PCNT. Also interacts with F-box protein BTRC. Interacts with serine/threonine-protein kinase PLK1; the interaction leads to phosphorylation of CEP68 and its subsequent degradation. Interacts with NEK2; the interaction leads to phosphorylation of CEP68. Phosphorylation by PLK1 is required for binding to BTRC in prometaphase. Phosphorylated directly or indirectly by NEK2. NEK2-mediated phosphorylation promotes CEP68 dissociation from the centrosome and its degradation at the onset of mitosis. Post-translationally, ubiquitinated and targeted for proteasomal degradation in early mitosis by the SCF(BTRC) and/or SCF(FBXW11) E3 ubiquitin-protein ligase complexes. Degradation is complete by prometaphase and is required for removal of CDK5RAP2 from the peripheral pericentriolar material and subsequent centriole separation.

The protein localises to the cytoplasm. Its subcellular location is the cytoskeleton. The protein resides in the microtubule organizing center. It localises to the centrosome. Its function is as follows. Involved in maintenance of centrosome cohesion, probably as part of a linker structure which prevents centrosome splitting. Required for localization of CDK5RAP2 to the centrosome during interphase. Contributes to CROCC/rootletin filament formation. This is Centrosomal protein of 68 kDa (CEP68) from Pongo abelii (Sumatran orangutan).